The sequence spans 307 residues: Membrane protein insertase YidC 2 (307 aa).

Residues 1 to 23 (MKLTLNRILFSGLALSILFTLTG) form the signal peptide. Residue Cys-24 is the site of N-palmitoyl cysteine attachment. Cys-24 is lipidated: S-diacylglycerol cysteine. The next 5 membrane-spanning stretches (helical) occupy residues 58–78 (LGYG…ILPL), 135–155 (LGGI…AMYF), 179–199 (VLTA…MMAV), 209–225 (TMMY…SFSL), and 231–251 (LYWL…TYLL). The segment at 263–307 (YAKNPPKAYQSTSSRKDVTPSQNMEQANLPKKIKSNRNAGKQRKR) is disordered. Positions 271 to 288 (YQSTSSRKDVTPSQNMEQ) are enriched in polar residues. A compositionally biased stretch (basic residues) spans 293-307 (KKIKSNRNAGKQRKR).

Belongs to the OXA1/ALB3/YidC family. Type 2 subfamily.

It localises to the cell membrane. Functionally, required for the insertion and/or proper folding and/or complex formation of integral membrane proteins into the membrane. Involved in integration of membrane proteins that insert both dependently and independently of the Sec translocase complex, as well as at least some lipoproteins. This is Membrane protein insertase YidC 2 from Streptococcus pyogenes serotype M3 (strain ATCC BAA-595 / MGAS315).